Reading from the N-terminus, the 201-residue chain is Probable molybdenum cofactor guanylyltransferase (201 aa).

GTP is bound by residues 6–8, Lys18, Asp65, and Asp97; that span reads LAG. Position 97 (Asp97) interacts with Mg(2+).

This sequence belongs to the MobA family. The cofactor is Mg(2+).

It localises to the cytoplasm. The enzyme catalyses Mo-molybdopterin + GTP + H(+) = Mo-molybdopterin guanine dinucleotide + diphosphate. In terms of biological role, transfers a GMP moiety from GTP to Mo-molybdopterin (Mo-MPT) cofactor (Moco or molybdenum cofactor) to form Mo-molybdopterin guanine dinucleotide (Mo-MGD) cofactor. This is Probable molybdenum cofactor guanylyltransferase from Staphylococcus epidermidis (strain ATCC 35984 / DSM 28319 / BCRC 17069 / CCUG 31568 / BM 3577 / RP62A).